The sequence spans 189 residues: MDKKKHGSHAGAHHTDEPAAETVAPAAEGAPAAADRVKELEEALAAKEAEAAANWDKFVRERADLENYRKRTQKEKEELLKYGNESLIVEILPVVDNMERALDHSDDDSASAVIEGVRMTLNMLLSTLKKFGVTVVEAEKGTPFDPAVHQAMCQVENTDVPANSVVEIFQKGYLLNERLIRPAMVSVSK.

Basic residues predominate over residues 1 to 12; that stretch reads MDKKKHGSHAGA. Positions 1-36 are disordered; it reads MDKKKHGSHAGAHHTDEPAAETVAPAAEGAPAAADR. Positions 20-34 are enriched in low complexity; it reads AETVAPAAEGAPAAA.

Belongs to the GrpE family. Homodimer.

Its subcellular location is the cytoplasm. Participates actively in the response to hyperosmotic and heat shock by preventing the aggregation of stress-denatured proteins, in association with DnaK and GrpE. It is the nucleotide exchange factor for DnaK and may function as a thermosensor. Unfolded proteins bind initially to DnaJ; upon interaction with the DnaJ-bound protein, DnaK hydrolyzes its bound ATP, resulting in the formation of a stable complex. GrpE releases ADP from DnaK; ATP binding to DnaK triggers the release of the substrate protein, thus completing the reaction cycle. Several rounds of ATP-dependent interactions between DnaJ, DnaK and GrpE are required for fully efficient folding. This chain is Protein GrpE, found in Geobacter metallireducens (strain ATCC 53774 / DSM 7210 / GS-15).